We begin with the raw amino-acid sequence, 617 residues long: BTB/POZ domain-containing protein At3g08570 (617 aa).

Residues 36-106 (GDITIVVDGE…CYGINFEITI (71 aa)) enclose the BTB domain. Residues 210 to 490 (EWWIEDLSAL…VRVLYSEQLR (281 aa)) form the NPH3 domain. Tyr431 is subject to Phosphotyrosine. Disordered regions lie at residues 505 to 525 (LSSQKHSSENPSRAVSPRDTY) and 585 to 617 (GGGPTEGKLRNANRKSKSRLERKTVRSRPESMF). The span at 602–617 (SRLERKTVRSRPESMF) shows a compositional bias: basic and acidic residues.

This sequence belongs to the NPH3 family.

The protein operates within protein modification; protein ubiquitination. May act as a substrate-specific adapter of an E3 ubiquitin-protein ligase complex (CUL3-RBX1-BTB) which mediates the ubiquitination and subsequent proteasomal degradation of target proteins. In Arabidopsis thaliana (Mouse-ear cress), this protein is BTB/POZ domain-containing protein At3g08570.